A 1196-amino-acid polypeptide reads, in one-letter code: Tubulin-specific chaperone D (1196 aa).

4 HEAT repeats span residues 363 to 401 (VIEQ…ADDV), 599 to 634 (YIAM…TYAL), 752 to 788 (SSIA…PGFL), and 1106 to 1142 (GDVR…VLTY).

This sequence belongs to the TBCD family. Found in a complex with at least ARL2, PPP2CB, PPP2R1A, PPP2R2A, PPP2R5E and TBCD. Interacts with PPP2CB. Part of a supercomplex made of cofactors A to E. Cofactors A and D function by capturing and stabilizing tubulin in a quasi-native conformation. Cofactor E binds to the cofactor D-tubulin complex; interaction with cofactor C then causes the release of tubulin polypeptides that are committed to the native state. Interacts with ARL2; interaction is enhanced with the GDP-bound form of ARL2. Does not interact with ARL3, ARL4A and ARL4D. Interacts with beta tubulin. Interacts with TBCE.

The protein resides in the cell junction. It localises to the tight junction. It is found in the lateral cell membrane. Its subcellular location is the cytoplasm. The protein localises to the adherens junction. The protein resides in the cytoskeleton. It localises to the microtubule organizing center. It is found in the centrosome. Its function is as follows. Tubulin-folding protein implicated in the first step of the tubulin folding pathway and required for tubulin complex assembly. Involved in the regulation of microtubule polymerization or depolymerization, it modulates microtubule dynamics by capturing GTP-bound beta-tubulin (TUBB). Its ability to interact with beta tubulin is regulated via its interaction with ARL2. Acts as a GTPase-activating protein (GAP) for ARL2. Induces microtubule disruption in absence of ARL2. Increases degradation of beta tubulin, when overexpressed in polarized cells. Promotes epithelial cell detachment, a process antagonized by ARL2. Induces tight adherens and tight junctions disassembly at the lateral cell membrane. Required for correct assembly and maintenance of the mitotic spindle, and proper progression of mitosis. Involved in neuron morphogenesis. This is Tubulin-specific chaperone D (Tbcd) from Mus musculus (Mouse).